The sequence spans 152 residues: Nucleoside diphosphate kinase B (152 aa).

Residues 1–66 (MANLERTFIA…DRPFFPGLVK (66 aa)) form an interaction with AKAP13 region. ATP is bound by residues Lys-12, Phe-60, Arg-88, Thr-94, Arg-105, and Asn-115. Catalysis depends on His-118, which acts as the Pros-phosphohistidine intermediate.

Belongs to the NDK family. As to quaternary structure, hexamer of two different chains: An and B (A6, A5B, A4B2, A3B3, A2B4, AB5, B6). Interacts with CAPN8. Interacts with AKAP13. Interacts with ITGB1BP1 (via C-terminal domain region). Interacts with BCL2L10. Mg(2+) serves as cofactor. Ubiquitously expressed.

It is found in the cytoplasm. The protein localises to the cell projection. It localises to the lamellipodium. Its subcellular location is the ruffle. The protein resides in the perinuclear region. It is found in the nucleus. It carries out the reaction a 2'-deoxyribonucleoside 5'-diphosphate + ATP = a 2'-deoxyribonucleoside 5'-triphosphate + ADP. It catalyses the reaction a ribonucleoside 5'-diphosphate + ATP = a ribonucleoside 5'-triphosphate + ADP. The catalysed reaction is ATP + protein L-histidine = ADP + protein N-phospho-L-histidine.. In terms of biological role, major role in the synthesis of nucleoside triphosphates other than ATP. The ATP gamma phosphate is transferred to the NDP beta phosphate via a ping-pong mechanism, using a phosphorylated active-site intermediate. Negatively regulates Rho activity by interacting with AKAP13/LBC. Acts as a transcriptional activator of the MYC gene; binds DNA non-specifically. Binds to both single-stranded guanine- and cytosine-rich strands within the nuclease hypersensitive element (NHE) III(1) region of the MYC gene promoter. Does not bind to duplex NHE III(1). Has G-quadruplex (G4) DNA-binding activity, which is independent of its nucleotide-binding and kinase activity. Binds both folded and unfolded G4 with similar low nanomolar affinities. Stabilizes folded G4s regardless of whether they are prefolded or not. Exhibits histidine protein kinase activity. The polypeptide is Nucleoside diphosphate kinase B (NME2) (Homo sapiens (Human)).